Here is a 179-residue protein sequence, read N- to C-terminus: Inner membrane-spanning protein YciB (179 aa).

A run of 5 helical transmembrane segments spans residues 22–42, 50–70, 76–96, 121–141, and 149–169; these read IYAA…YSWV, MALI…FFHN, WKVT…QWVM, LAWA…AFWL, and FKVF…GIYI.

This sequence belongs to the YciB family.

It is found in the cell inner membrane. Plays a role in cell envelope biogenesis, maintenance of cell envelope integrity and membrane homeostasis. In Shigella boydii serotype 4 (strain Sb227), this protein is Inner membrane-spanning protein YciB.